Reading from the N-terminus, the 378-residue chain is Spermidine/putrescine import ATP-binding protein PotA (378 aa).

The ABC transporter domain maps to 18–248 (VLLSGISKSF…PKNLFVAGFI (231 aa)). Residue 50–57 (GPSGCGKT) coordinates ATP.

Belongs to the ABC transporter superfamily. Spermidine/putrescine importer (TC 3.A.1.11.1) family. The complex is composed of two ATP-binding proteins (PotA), two transmembrane proteins (PotB and PotC) and a solute-binding protein (PotD).

Its subcellular location is the cell inner membrane. The catalysed reaction is ATP + H2O + polyamine-[polyamine-binding protein]Side 1 = ADP + phosphate + polyamineSide 2 + [polyamine-binding protein]Side 1.. Its function is as follows. Part of the ABC transporter complex PotABCD involved in spermidine/putrescine import. Responsible for energy coupling to the transport system. The polypeptide is Spermidine/putrescine import ATP-binding protein PotA (Salmonella typhi).